The primary structure comprises 658 residues: Protein teflon (658 aa).

The C2H2-type 1 zinc-finger motif lies at 33 to 56 (LYCHFCRDLFTQLPEFLRHLQGAH). Disordered stretches follow at residues 78–127 (EQDD…SEQK) and 151–175 (HINNESKPENGGFNGPCKKASSESN). Positions 100 to 111 (IPAKSEDSRAID) are enriched in basic and acidic residues. The span at 118–127 (DNSPVKSEQK) shows a compositional bias: polar residues. A C2H2-type 2; degenerate zinc finger spans residues 608-630 (YFCKCCDDIFTLNEDYTRHLVSQ). A C2H2-type 3 zinc finger spans residues 634-657 (YQCTKCIKAFKYRGHFEKHLQNVH).

It belongs to the Teflon family.

The protein localises to the nucleus. The protein resides in the chromosome. In terms of biological role, specifically required in males for proper segregation of autosomal bivalents at meiosis I. Expression is required in the male germ line prior to spermatocyte stage S4. May have a role as a bridging molecule maintaining adhesion to hold autosome bivalents together via heterochromatic connections. The sequence is that of Protein teflon from Drosophila erecta (Fruit fly).